Here is a 632-residue protein sequence, read N- to C-terminus: Chaperone protein DnaK (632 aa).

At Thr-198 the chain carries Phosphothreonine; by autocatalysis.

It belongs to the heat shock protein 70 family.

Acts as a chaperone. This is Chaperone protein DnaK from Rhodopseudomonas palustris (strain BisB18).